The primary structure comprises 583 residues: 2-succinyl-5-enolpyruvyl-6-hydroxy-3-cyclohexene-1-carboxylate synthase (583 aa).

This sequence belongs to the TPP enzyme family. MenD subfamily. In terms of assembly, homodimer. Mg(2+) serves as cofactor. Mn(2+) is required as a cofactor. Requires thiamine diphosphate as cofactor.

It catalyses the reaction isochorismate + 2-oxoglutarate + H(+) = 5-enolpyruvoyl-6-hydroxy-2-succinyl-cyclohex-3-ene-1-carboxylate + CO2. It functions in the pathway quinol/quinone metabolism; 1,4-dihydroxy-2-naphthoate biosynthesis; 1,4-dihydroxy-2-naphthoate from chorismate: step 2/7. It participates in cofactor biosynthesis; phylloquinone biosynthesis. Functionally, catalyzes the thiamine diphosphate-dependent decarboxylation of 2-oxoglutarate and the subsequent addition of the resulting succinic semialdehyde-thiamine pyrophosphate anion to isochorismate to yield 2-succinyl-5-enolpyruvyl-6-hydroxy-3-cyclohexene-1-carboxylate (SEPHCHC). The chain is 2-succinyl-5-enolpyruvyl-6-hydroxy-3-cyclohexene-1-carboxylate synthase from Trichormus variabilis (strain ATCC 29413 / PCC 7937) (Anabaena variabilis).